Here is a 365-residue protein sequence, read N- to C-terminus: tRNA-specific 2-thiouridylase MnmA (365 aa).

Residues 6-13 and M32 contribute to the ATP site; that span reads AMSGGVDS. C101 functions as the Nucleophile in the catalytic mechanism. Residues C101 and C199 are joined by a disulfide bond. Residue G125 coordinates ATP. The segment at 148-150 is interaction with tRNA; it reads KDQ. C199 functions as the Cysteine persulfide intermediate in the catalytic mechanism.

The protein belongs to the MnmA/TRMU family.

The protein resides in the cytoplasm. The enzyme catalyses S-sulfanyl-L-cysteinyl-[protein] + uridine(34) in tRNA + AH2 + ATP = 2-thiouridine(34) in tRNA + L-cysteinyl-[protein] + A + AMP + diphosphate + H(+). Functionally, catalyzes the 2-thiolation of uridine at the wobble position (U34) of tRNA, leading to the formation of s(2)U34. The sequence is that of tRNA-specific 2-thiouridylase MnmA from Kineococcus radiotolerans (strain ATCC BAA-149 / DSM 14245 / SRS30216).